The primary structure comprises 607 residues: Elongation factor 4 (607 aa).

The tr-type G domain maps to 11–193; that stretch reads ENIRNFSIIA…KIVEVVPAPD (183 aa). GTP contacts are provided by residues 23–28 and 140–143; these read DHGKST and NKID.

Belongs to the TRAFAC class translation factor GTPase superfamily. Classic translation factor GTPase family. LepA subfamily.

The protein localises to the cell membrane. It carries out the reaction GTP + H2O = GDP + phosphate + H(+). Functionally, required for accurate and efficient protein synthesis under certain stress conditions. May act as a fidelity factor of the translation reaction, by catalyzing a one-codon backward translocation of tRNAs on improperly translocated ribosomes. Back-translocation proceeds from a post-translocation (POST) complex to a pre-translocation (PRE) complex, thus giving elongation factor G a second chance to translocate the tRNAs correctly. Binds to ribosomes in a GTP-dependent manner. The chain is Elongation factor 4 from Staphylococcus aureus (strain USA300).